The sequence spans 107 residues: Phosphoribosyl-ATP pyrophosphatase (107 aa).

The protein belongs to the PRA-PH family.

The protein resides in the cytoplasm. The catalysed reaction is 1-(5-phospho-beta-D-ribosyl)-ATP + H2O = 1-(5-phospho-beta-D-ribosyl)-5'-AMP + diphosphate + H(+). It participates in amino-acid biosynthesis; L-histidine biosynthesis; L-histidine from 5-phospho-alpha-D-ribose 1-diphosphate: step 2/9. The protein is Phosphoribosyl-ATP pyrophosphatase of Sinorhizobium medicae (strain WSM419) (Ensifer medicae).